A 454-amino-acid chain; its full sequence is tRNA modification GTPase MnmE (454 aa).

Arg26, Glu84, and Lys123 together coordinate (6S)-5-formyl-5,6,7,8-tetrahydrofolate. A TrmE-type G domain is found at 219–378; sequence GLQVVIAGKP…LVDAITAHAG (160 aa). Position 229 (Asn229) interacts with K(+). GTP is bound by residues 229 to 234, 248 to 254, and 273 to 276; these read NAGKSS, TDIAGTT, and DTAG. Ser233 is a Mg(2+) binding site. K(+) is bound by residues Thr248, Ile250, and Thr253. Residue Thr254 coordinates Mg(2+). Lys454 contributes to the (6S)-5-formyl-5,6,7,8-tetrahydrofolate binding site.

Belongs to the TRAFAC class TrmE-Era-EngA-EngB-Septin-like GTPase superfamily. TrmE GTPase family. As to quaternary structure, homodimer. Heterotetramer of two MnmE and two MnmG subunits. K(+) is required as a cofactor.

Its subcellular location is the cytoplasm. In terms of biological role, exhibits a very high intrinsic GTPase hydrolysis rate. Involved in the addition of a carboxymethylaminomethyl (cmnm) group at the wobble position (U34) of certain tRNAs, forming tRNA-cmnm(5)s(2)U34. The protein is tRNA modification GTPase MnmE of Acinetobacter baumannii (strain AYE).